The following is a 379-amino-acid chain: Glutamate 5-kinase (379 aa).

An ATP-binding site is contributed by Lys19. Ser59, Asp146, and Asn158 together coordinate substrate. ATP-binding positions include 178–179 (TD) and 220–226 (TGGMATK). A PUA domain is found at 285–363 (SGDIIIDDGA…KDIISILGHD (79 aa)).

This sequence belongs to the glutamate 5-kinase family.

The protein resides in the cytoplasm. It catalyses the reaction L-glutamate + ATP = L-glutamyl 5-phosphate + ADP. It functions in the pathway amino-acid biosynthesis; L-proline biosynthesis; L-glutamate 5-semialdehyde from L-glutamate: step 1/2. Its function is as follows. Catalyzes the transfer of a phosphate group to glutamate to form L-glutamate 5-phosphate. The polypeptide is Glutamate 5-kinase (Vibrio parahaemolyticus serotype O3:K6 (strain RIMD 2210633)).